A 369-amino-acid polypeptide reads, in one-letter code: Glycolate oxidase (369 aa).

The residue at position 1 (Met-1) is an N-acetylmethionine. Residues Met-1–Asp-359 form the FMN hydroxy acid dehydrogenase domain. Tyr-24 serves as a coordination point for glyoxylate. FMN-binding positions include Pro-77–Ala-79, Ser-106, Gln-127–Tyr-129, and Thr-155. Tyr-129 contributes to the glyoxylate binding site. Arg-164 is a glyoxylate binding site. FMN is bound by residues Lys-230 and Ser-252. Glyoxylate is bound by residues His-254 and Arg-257. The Proton acceptor role is filled by His-254. FMN is bound by residues Asp-285–Arg-289 and Gly-308–Arg-309. The short motif at Ala-367–Leu-369 is the Microbody targeting signal element.

Belongs to the FMN-dependent alpha-hydroxy acid dehydrogenase family. As to quaternary structure, homotetramer. Requires FMN as cofactor.

The protein resides in the peroxisome. It catalyses the reaction glycolate + O2 = glyoxylate + H2O2. The catalysed reaction is a (2S)-2-hydroxycarboxylate + O2 = a 2-oxocarboxylate + H2O2. It functions in the pathway photosynthesis; photorespiration; glycine from 2-phosphoglycolate: step 2/3. Catalyzes the oxidation of glycolate to glyoxylate, with a reduction of O2 to H2O2. Is a key enzyme in photorespiration in green plants. To a lesser extent, is also able to use L-lactate and 2-hydroxbyutanoate as substrate in vitro, but shows almost no activity with L-mandelate. The protein is Glycolate oxidase of Spinacia oleracea (Spinach).